We begin with the raw amino-acid sequence, 256 residues long: Small ribosomal subunit protein eS1 (256 aa).

A2 is subject to N-acetylalanine; partial.

The protein belongs to the eukaryotic ribosomal protein eS1 family. Component of the small ribosomal subunit. Mature ribosomes consist of a small (40S) and a large (60S) subunit. The 40S subunit contains about 33 different proteins and 1 molecule of RNA (18S). The 60S subunit contains about 49 different proteins and 3 molecules of RNA (25S, 5.8S and 5S).

The protein resides in the cytoplasm. This chain is Small ribosomal subunit protein eS1 (rps1), found in Botryotinia fuckeliana (strain B05.10) (Noble rot fungus).